Here is a 1326-residue protein sequence, read N- to C-terminus: Paired amphipathic helix protein Sin3-like 4 (1326 aa).

3 consecutive PAH domains span residues 8–78 (QKLT…LPKG), 95–165 (KPVE…LPDT), and 292–367 (IPSS…LAQC). Disordered stretches follow at residues 272-299 (DDDS…STYD), 715-812 (VPSR…RAET), 844-864 (SVAG…TEEL), and 927-1000 (SKSK…EGDM). The segment covering 721-737 (GAEDREDAVKSTNHDRE) has biased composition (basic and acidic residues). Polar residues-rich tracts occupy residues 744 to 757 (SPQN…SMRS), 781 to 805 (SSKT…NLTT), 844 to 861 (SVAG…TSGT), and 942 to 961 (PRSS…SGTD). Basic and acidic residues predominate over residues 967 to 981 (DCYREDDIDHNKVES).

The protein resides in the nucleus. Functionally, acts as a transcriptional repressor. Plays roles in regulating gene expression and genome stability. This is Paired amphipathic helix protein Sin3-like 4 (SNL4) from Arabidopsis thaliana (Mouse-ear cress).